A 347-amino-acid polypeptide reads, in one-letter code: F-box/kelch-repeat protein At5g03020 (347 aa).

Residues 1–21 (MTEEMSKESPPPPPTSFSSLP) are disordered. The 49-residue stretch at 14 to 62 (PTSFSSLPDDVALDCRARISRFHYPTLSLVSKGFRTLIASPELEATRSF) folds into the F-box domain. Kelch repeat units lie at residues 119–165 (QIYI…VIDG) and 167–215 (IYVI…KKKH).

The protein is F-box/kelch-repeat protein At5g03020 of Arabidopsis thaliana (Mouse-ear cress).